The following is a 314-amino-acid chain: Leucotoxin LukE (314 aa).

An N-terminal signal peptide occupies residues 1–28; the sequence is MFKKKMLAASLSVGLIAPLASPIQESRA.

The protein belongs to the aerolysin family. As to quaternary structure, toxicity requires sequential binding and synergistic association of a class S and a class F component which form heterooligomeric complexes. LukE (class S) associates with LukD (class F). LukE can also associate with HlgB.

Its subcellular location is the secreted. Functionally, part of a bi-component leucotoxin that acts by forming pores in the membrane of the target cells. LukE-LukD is as effective as the Panton-Valentine leucocidin (PVL) for inducing dermonecrosis when injected in the rabbit skin, but not hemolytic and poorly leucotoxic on human blood cells compared to other leucotoxins expressed by S.aureus. This is Leucotoxin LukE (lukE) from Staphylococcus aureus.